Reading from the N-terminus, the 40-residue chain is 67 kDa serum albumin (40 aa).

Residues 1–40 form the Albumin domain; it reads DAEHKSEIVHRFNDLKEEKFKGAALITFAQFLHKKPEEEA. Position 4 (His-4) interacts with Cu cation.

This sequence belongs to the ALB/AFP/VDB family. In terms of tissue distribution, plasma.

Its subcellular location is the secreted. Functionally, serum albumin, the main protein of plasma, has a good binding capacity for water, Ca(2+), Na(+), K(+), fatty acids, hormones, bilirubin and drugs. Its main function is the regulation of the colloidal osmotic pressure of blood. This is 67 kDa serum albumin from Trachemys scripta (Red-eared slider turtle).